The sequence spans 412 residues: Divalent metal cation transporter MntH (412 aa).

The Cytoplasmic portion of the chain corresponds to 1-19; it reads MTNYRVESSSGRAARKTRL. Residues 20–39 traverse the membrane as a helical segment; sequence ALMGPAFIAAIGYIDPGNFA. Over 40–51 the chain is Periplasmic; sequence TNIQAGASFGYQ. Residues 52–71 form a helical membrane-spanning segment; that stretch reads LLWVVVWANLMAMLIQILSA. The Cytoplasmic segment spans residues 72–95; it reads KLGIATGKNLAEQIRDHYPRPVVW. The helical transmembrane segment at 96-118 threads the bilayer; sequence FYWVQAEIIAMATDLAEFIGAAI. At 119–125 the chain is on the periplasmic side; the sequence is GFKLILG. Residues 126–145 form a helical membrane-spanning segment; the sequence is VSLLQGAVLTGIATFLILML. Over 146–155 the chain is Cytoplasmic; the sequence is QRRGQKPLEK. A helical membrane pass occupies residues 156–175; sequence VIGGLLLFVAAAYIVELIFS. Residues 176–196 are Periplasmic-facing; the sequence is QPNLAQLGKGMVIPSLPTSEA. The chain crosses the membrane as a helical span at residues 197-220; the sequence is VFLAAGVLGATIMPHVIYLHSSLT. The Cytoplasmic segment spans residues 221–238; that stretch reads QHLHGGSRQQRYSATKWD. The chain crosses the membrane as a helical span at residues 239–258; the sequence is VAIAMTIAGFVNLAMMATAA. The Periplasmic segment spans residues 259-276; sequence AAFHFSGHTGVADLDEAY. The helical transmembrane segment at 277–297 threads the bilayer; it reads LTLQPLLSHAAATVFGLSLVA. Topologically, residues 298–327 are cytoplasmic; sequence AGLSSTVVGTLAGQVVMQGFIRFHIPLWVR. The helical transmembrane segment at 328-344 threads the bilayer; sequence RTVTMLPSFIVILMGLD. Topologically, residues 345-350 are periplasmic; sequence PTRILV. The helical transmembrane segment at 351 to 370 threads the bilayer; that stretch reads MSQVLLSFGIALALVPLLIF. Residues 371-387 are Cytoplasmic-facing; the sequence is TSDSKLMGDLVNSKRVK. The helical transmembrane segment at 388 to 406 threads the bilayer; the sequence is QTGWVIVVLVVALNIWLLV. The Periplasmic portion of the chain corresponds to 407–412; the sequence is GTALGL.

This sequence belongs to the NRAMP family.

The protein resides in the cell inner membrane. In terms of biological role, h(+)-stimulated, divalent metal cation uptake system. This is Divalent metal cation transporter MntH from Escherichia coli O9:H4 (strain HS).